Consider the following 269-residue polypeptide: Formamidopyrimidine-DNA glycosylase (269 aa).

Pro2 (schiff-base intermediate with DNA) is an active-site residue. Glu3 serves as the catalytic Proton donor. The active-site Proton donor; for beta-elimination activity is the Lys57. Positions 90, 109, and 150 each coordinate DNA. The FPG-type zinc finger occupies 235 to 269; the sequence is QVYGRKGEPCRVCGTPIVATKHAQRATFYCRHCQK. The Proton donor; for delta-elimination activity role is filled by Arg259.

This sequence belongs to the FPG family. Monomer. The cofactor is Zn(2+).

It catalyses the reaction Hydrolysis of DNA containing ring-opened 7-methylguanine residues, releasing 2,6-diamino-4-hydroxy-5-(N-methyl)formamidopyrimidine.. It carries out the reaction 2'-deoxyribonucleotide-(2'-deoxyribose 5'-phosphate)-2'-deoxyribonucleotide-DNA = a 3'-end 2'-deoxyribonucleotide-(2,3-dehydro-2,3-deoxyribose 5'-phosphate)-DNA + a 5'-end 5'-phospho-2'-deoxyribonucleoside-DNA + H(+). Involved in base excision repair of DNA damaged by oxidation or by mutagenic agents. Acts as a DNA glycosylase that recognizes and removes damaged bases. Has a preference for oxidized purines, such as 7,8-dihydro-8-oxoguanine (8-oxoG). Has AP (apurinic/apyrimidinic) lyase activity and introduces nicks in the DNA strand. Cleaves the DNA backbone by beta-delta elimination to generate a single-strand break at the site of the removed base with both 3'- and 5'-phosphates. The polypeptide is Formamidopyrimidine-DNA glycosylase (Salmonella newport (strain SL254)).